The sequence spans 159 residues: Succinate dehydrogenase [ubiquinone] cytochrome b small subunit, mitochondrial (159 aa).

The N-terminal 56 residues, 1 to 56, are a transit peptide targeting the mitochondrion; it reads MAVLWRLSAVCGALGGRALLLRTPVVRPAHISAFLQDRPIPEWCGVQHIHLSPSHH. The Mitochondrial matrix portion of the chain corresponds to 57–63; it reads SGSKAAS. A helical membrane pass occupies residues 64–85; it reads LHWTSERVVSVLLLGLLPAAYL. At 86–90 the chain is on the mitochondrial intermembrane side; the sequence is NPCSA. Residues 91–111 traverse the membrane as a helical segment; that stretch reads MDYSLAAALTLHGHWGLGQVV. His-102 serves as a coordination point for heme b. At 112–122 the chain is on the mitochondrial matrix side; that stretch reads TDYVHGDALQK. Tyr-114 is an a ubiquinone binding site. A helical membrane pass occupies residues 123–144; it reads AAKAGLLALSALTFAGLCYFNY. Residues 145–159 lie on the Mitochondrial intermembrane side of the membrane; it reads HDVGICKAVAMLWKL.

It belongs to the CybS family. In terms of assembly, component of complex II composed of four subunits: the flavoprotein (FP) SDHA, iron-sulfur protein (IP) SDHB, and a cytochrome b560 composed of SDHC and SDHD.

It is found in the mitochondrion inner membrane. It participates in carbohydrate metabolism; tricarboxylic acid cycle. Its function is as follows. Membrane-anchoring subunit of succinate dehydrogenase (SDH) that is involved in complex II of the mitochondrial electron transport chain and is responsible for transferring electrons from succinate to ubiquinone (coenzyme Q). SDH also oxidizes malate to the non-canonical enol form of oxaloacetate, enol-oxaloacetate. Enol-oxaloacetate, which is a potent inhibitor of the succinate dehydrogenase activity, is further isomerized into keto-oxaloacetate. This is Succinate dehydrogenase [ubiquinone] cytochrome b small subunit, mitochondrial (SDHD) from Homo sapiens (Human).